Reading from the N-terminus, the 462-residue chain is Argininosuccinate lyase (462 aa).

Belongs to the lyase 1 family. Argininosuccinate lyase subfamily.

It is found in the cytoplasm. It carries out the reaction 2-(N(omega)-L-arginino)succinate = fumarate + L-arginine. It functions in the pathway amino-acid biosynthesis; L-arginine biosynthesis; L-arginine from L-ornithine and carbamoyl phosphate: step 3/3. This is Argininosuccinate lyase from Bacillus thuringiensis (strain Al Hakam).